We begin with the raw amino-acid sequence, 35 residues long: uncharacterized protein (35 aa).

The helical transmembrane segment at 14–34 threads the bilayer; it reads LAHLIGIIYLIIILGTLVMLF.

The protein localises to the endoplasmic reticulum membrane. This is an uncharacterized protein from Saccharomyces cerevisiae (strain ATCC 204508 / S288c) (Baker's yeast).